Reading from the N-terminus, the 66-residue chain is Large ribosomal subunit protein bL33 (66 aa).

It belongs to the bacterial ribosomal protein bL33 family.

The chain is Large ribosomal subunit protein bL33 from Wolbachia pipientis wMel.